Reading from the N-terminus, the 328-residue chain is DNA-directed RNA polymerase subunit alpha (328 aa).

Positions 1–232 (MSTQGFLKPR…DQISVFAALE (232 aa)) are alpha N-terminal domain (alpha-NTD). The interval 248–328 (IDPVLLRPVD…NWPPLGLERP (81 aa)) is alpha C-terminal domain (alpha-CTD).

The protein belongs to the RNA polymerase alpha chain family. Homodimer. The RNAP catalytic core consists of 2 alpha, 1 beta, 1 beta' and 1 omega subunit. When a sigma factor is associated with the core the holoenzyme is formed, which can initiate transcription.

It catalyses the reaction RNA(n) + a ribonucleoside 5'-triphosphate = RNA(n+1) + diphosphate. Functionally, DNA-dependent RNA polymerase catalyzes the transcription of DNA into RNA using the four ribonucleoside triphosphates as substrates. This is DNA-directed RNA polymerase subunit alpha from Bordetella petrii (strain ATCC BAA-461 / DSM 12804 / CCUG 43448).